Here is a 199-residue protein sequence, read N- to C-terminus: uncharacterized protein (199 aa).

Residues 17 to 37 (AGAVTLGIGFFALASALWFLI) traverse the membrane as a helical segment.

It localises to the membrane. This is an uncharacterized protein from Homo sapiens (Human).